The following is a 195-amino-acid chain: U8 snoRNA-decapping enzyme (195 aa).

One can recognise a Nudix hydrolase domain in the interval 18-173 (DWRHACHALL…IGAAREQLLE (156 aa)). 3 residues coordinate substrate: histidine 24, arginine 50, and phenylalanine 57. Mn(2+)-binding residues include glycine 59, glutamate 76, glutamate 80, and histidine 99. A Nudix box motif is present at residues 61–82 (FVDAQDSCLEDGLNRELREELG). Glutamine 170 contributes to the substrate binding site. Glutamate 173 provides a ligand contact to Mn(2+).

This sequence belongs to the Nudix hydrolase family. NUDT16 subfamily. Homodimer. Mg(2+) is required as a cofactor. It depends on Mn(2+) as a cofactor. The cofactor is Co(2+). In terms of tissue distribution, expressed in brain, testis, spleen, lung, heart, liver, kidney and muscle (at protein level).

It localises to the nucleus. It is found in the nucleolus. Its subcellular location is the nucleoplasm. The protein localises to the cytoplasm. It carries out the reaction a 5'-end (N(7)-methyl 5'-triphosphoguanosine)-ribonucleoside in mRNA + H2O = N(7)-methyl-GDP + a 5'-end phospho-ribonucleoside in mRNA + 2 H(+). It catalyses the reaction IDP + H2O = IMP + phosphate + H(+). The catalysed reaction is dIDP + H2O = dIMP + phosphate + H(+). The enzyme catalyses a 5'-end NAD(+)-phospho-ribonucleoside in mRNA + H2O = a 5'-end phospho-ribonucleoside in mRNA + NAD(+) + H(+). It carries out the reaction a 5'-end FAD-phospho-ribonucleoside in mRNA + H2O = a 5'-end phospho-adenosine-phospho-ribonucleoside in mRNA + FMN + 2 H(+). It catalyses the reaction a 5'-end CoA-ribonucleoside in mRNA + H2O = a 5'-end phospho-adenosine-phospho-ribonucleoside in mRNA + (R)-4'-phosphopantetheine + 2 H(+). In terms of biological role, RNA-binding and decapping enzyme that catalyzes the cleavage of the cap structure of snoRNAs and mRNAs in a metal-dependent manner. Part of the U8 snoRNP complex that is required for the accumulation of mature 5.8S and 28S rRNA. Has diphosphatase activity and removes m7G and/or m227G caps from U8 snoRNA and leaves a 5'monophosphate on the RNA. Also catalyzes the cleavage of the cap structure on mRNAs. Does not hydrolyze cap analog structures like 7-methylguanosine nucleoside triphosphate (m7GpppG). Also hydrolysis m7G- and m227G U3-capped RNAs but with less efficiencies. Has broad substrate specificity with manganese or cobalt as cofactor and can act on various RNA species. Binds to the U8 snoRNA; metal is not required for RNA-binding. May play a role in the regulation of snoRNAs and mRNAs degradation. Also acts as a phosphatase; hydrolyzes the non-canonical purine nucleotides inosine diphosphate (IDP) and deoxyinosine diphosphate (dITP) as well as guanosine diphosphate (GDP), deoxyguanosine diphosphate (dGDP), xanthine diphosphate (XDP), inosine triphosphate (ITP) and deoxyinosine triphosphate (ITP) to their respective monophosphate derivatives and does not distinguish between the deoxy- and ribose forms. The order of activity with different substrates is IDP &gt; dIDP &gt;&gt; GDP = dGDP &gt; XDP = ITP = dITP. Binds strongly to GTP, ITP and XTP. Participates in the hydrolysis of dIDP/IDP and probably excludes non-canonical purines from RNA and DNA precursor pools, thus preventing their incorporation into RNA and DNA and avoiding chromosomal lesions. Exhibits decapping activity towards NAD-capped RNAs and FAD-capped RNAs. Exhibits decapping activity towards dpCoA-capped RNAs in vitro. The protein is U8 snoRNA-decapping enzyme (Nudt16) of Mus musculus (Mouse).